Consider the following 118-residue polypeptide: Flowering-promoting factor 1-like protein 4 (118 aa).

The protein belongs to the FPF1 family.

This is Flowering-promoting factor 1-like protein 4 from Oryza sativa subsp. japonica (Rice).